The chain runs to 224 residues: LexA repressor (224 aa).

Residues 31–51 (RAEIAAELGFKSANAAEEHLQ) constitute a DNA-binding region (H-T-H motif). Catalysis depends on for autocatalytic cleavage activity residues Ser142 and Lys179.

The protein belongs to the peptidase S24 family. In terms of assembly, homodimer.

It carries out the reaction Hydrolysis of Ala-|-Gly bond in repressor LexA.. Represses a number of genes involved in the response to DNA damage (SOS response), including recA and lexA. In the presence of single-stranded DNA, RecA interacts with LexA causing an autocatalytic cleavage which disrupts the DNA-binding part of LexA, leading to derepression of the SOS regulon and eventually DNA repair. The protein is LexA repressor of Verminephrobacter eiseniae (strain EF01-2).